Here is a 72-residue protein sequence, read N- to C-terminus: Small proline-rich protein 2E (72 aa).

Over residues 1–11 (MSYQQQQCKQP) the composition is skewed to low complexity. Positions 1 to 20 (MSYQQQQCKQPCQPPPVCPT) are disordered. Tandem repeats lie at residues 21-29 (PKCPEPCPP), 30-38 (PKCPEPCPP), and 39-47 (PKCPQPCPP). Positions 21 to 47 (PKCPEPCPPPKCPEPCPPPKCPQPCPP) are 3 X 9 AA tandem repeats of P-K-C-P-[EQ]-P-C-P-P. Residues 42 to 72 (PQPCPPQQCQQKCPPVTPSPPCQPKCPPKSK) form a disordered region. A compositionally biased stretch (pro residues) spans 56-72 (PVTPSPPCQPKCPPKSK).

This sequence belongs to the cornifin (SPRR) family.

It localises to the cytoplasm. Cross-linked envelope protein of keratinocytes. It is a keratinocyte protein that first appears in the cell cytosol, but ultimately becomes cross-linked to membrane proteins by transglutaminase. All that results in the formation of an insoluble envelope beneath the plasma membrane. The polypeptide is Small proline-rich protein 2E (SPRR2E) (Homo sapiens (Human)).